The chain runs to 861 residues: MIGQITSGLFGGPDDSKKLKGTVVMMNKNALDFTDLAGSLTDKAFEFLGQTVSFQLISSVQGDPTNGLQGKHSNPAYLENSLFTLTPLTAGSETAFGVTFDWNEEFGVPGAFIIKNTHINEFFLKSLTLEDVPNHGKVHFVCNSWVYPSFRYKSDRIFFVNQPYLPSKTPELLRKYRENELLTLRGDGTGKREAWDRIYDYDIYNDLGNPDEGKENVRTTLGGSAEYPYPRRGRTGRPPTRTDPKSESRIPLILSLDIYVPRDERFGHLKMSDFLTYALKSIVQFILPELHALFDGTPNEFDSFEDVLRLYEGGIKLPQGPLFKALTAAIPLEMIRELLRTDGEGILRFPTPLVIKDSKTAWRTDEEFAREMLAGVNPVIISRLQEFPPKSKLDPEAYGNQNSTITAEHIEDKLDGLTVDEAMNNNKLFILNHHDVLIPYLRRINTTTTKTYASRTLLFLQDNGSLKPLAIELSLPHPDGDQFGVTSKVYTPSDQGVESSIWQLAKAYVAVNDSGVHQLISHWLNTHAVIEPFVIATNRQLSVLHPIHKLLYPHFRDTMNINAMARQILINAGGVLESTVFQSKFAMEMSAVVYKDWVFPDQALPADLVKRGVAVEDSSSPHGVRLLIEDYPYAVDGLEIWSAIKSWVSDYCSFYYGSDEEILKDNELQAWWKELREVGHGDKKNEPWWPEMERPQELIDSCTTIIWIASALHAAVNFGQYPYAGYLPNRPTVSRRFMPEPGTPEYEELKKNPDKAFLKTITAQLQTLLGVSLIEILSRHTTDEIYLGQRESPEWTKDKEPLAAFDKFGKKLTDIEKQIIQRNGDNILTNRSGPVNAPYTLLFPTSEGGLTGKGIPNSVSI.

The PLAT domain occupies 29-160; it reads NALDFTDLAG…RYKSDRIFFV (132 aa). The region spanning 163–861 is the Lipoxygenase domain; sequence PYLPSKTPEL…GKGIPNSVSI (699 aa). The disordered stretch occupies residues 212–246; sequence EGKENVRTTLGGSAEYPYPRRGRTGRPPTRTDPKS. The Fe cation site is built by His-522, His-527, His-713, Asn-717, and Ile-861.

This sequence belongs to the lipoxygenase family. In terms of assembly, monomer. It depends on Fe cation as a cofactor. In terms of tissue distribution, highly expressed in tubers and roots. Detected in flower buds and leaves.

The protein localises to the cytoplasm. It catalyses the reaction (9Z,12Z)-octadecadienoate + O2 = (9S)-hydroperoxy-(10E,12Z)-octadecadienoate. It participates in lipid metabolism; oxylipin biosynthesis. Functionally, plant lipoxygenases may be involved in a number of diverse aspects of plant physiology including growth and development, pest resistance, and senescence or responses to wounding. Catalyzes the hydroperoxidation of lipids containing a cis,cis-1,4-pentadiene structure. Linoleic acid is the preferred substrate, but is also active with linolenic and arachidonic acids. This Solanum tuberosum (Potato) protein is Linoleate 9S-lipoxygenase 2 (LOX1.2).